Consider the following 445-residue polypeptide: Putative serpin-Z5 (445 aa).

The RCL stretch occupies residues 356 to 380 (GTEAAASAINMVCGMSMTPEPRPVP).

It belongs to the serpin family.

In terms of biological role, probable serine protease inhibitor. The chain is Putative serpin-Z5 from Oryza sativa subsp. japonica (Rice).